The chain runs to 393 residues: Pyridoxamine--pyruvate transaminase (393 aa).

Residues glutamate 68, tyrosine 95, and threonine 146 each coordinate pyridoxal 5'-phosphate. Lysine 197 carries the post-translational modification N6-(pyridoxal phosphate)lysine. Arginine 345 provides a ligand contact to pyridoxal 5'-phosphate.

Belongs to the class-V pyridoxal-phosphate-dependent aminotransferase family. As to quaternary structure, homotetramer. Pyridoxal 5'-phosphate is required as a cofactor.

It carries out the reaction pyridoxamine + pyruvate = pyridoxal + L-alanine. In terms of biological role, catalyzes a reversible transamination reaction between pyridoxamine and pyruvate to form pyridoxal and L-alanine. This is Pyridoxamine--pyruvate transaminase (ppaT) from Mesorhizobium japonicum (strain LMG 29417 / CECT 9101 / MAFF 303099) (Mesorhizobium loti (strain MAFF 303099)).